The sequence spans 239 residues: tRNA (guanine-N(7)-)-methyltransferase (239 aa).

Positions 68, 93, 120, and 143 each coordinate S-adenosyl-L-methionine. Asp143 is an active-site residue. Substrate is bound by residues Lys147, Asp180, and 217–220; that span reads TKFE.

The protein belongs to the class I-like SAM-binding methyltransferase superfamily. TrmB family.

The catalysed reaction is guanosine(46) in tRNA + S-adenosyl-L-methionine = N(7)-methylguanosine(46) in tRNA + S-adenosyl-L-homocysteine. It participates in tRNA modification; N(7)-methylguanine-tRNA biosynthesis. Catalyzes the formation of N(7)-methylguanine at position 46 (m7G46) in tRNA. This Vibrio parahaemolyticus serotype O3:K6 (strain RIMD 2210633) protein is tRNA (guanine-N(7)-)-methyltransferase.